Consider the following 95-residue polypeptide: Glutaredoxin 1 (95 aa).

The Glutaredoxin domain maps to 1–95 (MNKSILHTII…DKLLEHQPKN (95 aa)). A disulfide bridge links Cys17 with Cys20.

It belongs to the glutaredoxin family. As to quaternary structure, monomer.

It is found in the cytoplasm. Functionally, has a glutathione-disulfide oxidoreductase activity in the presence of NADPH and glutathione reductase. Reduces low molecular weight disulfides and proteins. The chain is Glutaredoxin 1 (grxC1) from Rickettsia prowazekii (strain Madrid E).